Consider the following 256-residue polypeptide: tRNA (guanine-N(7)-)-methyltransferase (256 aa).

S-adenosyl-L-methionine contacts are provided by Glu-85, Glu-110, Asp-137, and Asp-159. The active site involves Asp-159. The substrate site is built by Lys-163 and Asp-195.

Belongs to the class I-like SAM-binding methyltransferase superfamily. TrmB family.

The enzyme catalyses guanosine(46) in tRNA + S-adenosyl-L-methionine = N(7)-methylguanosine(46) in tRNA + S-adenosyl-L-homocysteine. It participates in tRNA modification; N(7)-methylguanine-tRNA biosynthesis. Its function is as follows. Catalyzes the formation of N(7)-methylguanine at position 46 (m7G46) in tRNA. This Rhodopseudomonas palustris (strain HaA2) protein is tRNA (guanine-N(7)-)-methyltransferase.